Reading from the N-terminus, the 61-residue chain is Small ribosomal subunit protein uS14 (61 aa).

Zn(2+) is bound by residues Cys24, Cys27, Cys40, and Cys43.

This sequence belongs to the universal ribosomal protein uS14 family. Zinc-binding uS14 subfamily. Part of the 30S ribosomal subunit. Contacts proteins S3 and S10. It depends on Zn(2+) as a cofactor.

Binds 16S rRNA, required for the assembly of 30S particles and may also be responsible for determining the conformation of the 16S rRNA at the A site. The chain is Small ribosomal subunit protein uS14 from Campylobacter jejuni subsp. jejuni serotype O:6 (strain 81116 / NCTC 11828).